The chain runs to 581 residues: DEAD-box ATP-dependent RNA helicase 22 (581 aa).

The Q motif motif lies at 80-108 (VSWKSLGLSDNVSIALRDSGFDRPSLTQA). A Helicase ATP-binding domain is found at 111–380 (IPSILSGKDV…GGILKHMFQD (270 aa)). Residue 124 to 131 (AETGSGKT) participates in ATP binding. The DEAD box signature appears at 244 to 247 (DEAD). A Helicase C-terminal domain is found at 408 to 566 (QVDALIEAVK…GFRNKVKKRA (159 aa)).

It belongs to the DEAD box helicase family.

The catalysed reaction is ATP + H2O = ADP + phosphate + H(+). In Arabidopsis thaliana (Mouse-ear cress), this protein is DEAD-box ATP-dependent RNA helicase 22 (RH22).